Here is a 248-residue protein sequence, read N- to C-terminus: Pulmonary surfactant-associated protein A (248 aa).

The first 20 residues, 1 to 20, serve as a signal peptide directing secretion; sequence MWLCPLALTLTLMAASGAAC. Residues 31–100 enclose the Collagen-like domain; it reads GIPGTPGSHG…PGERGPPGLP (70 aa). Residues 33–100 form a disordered region; it reads PGTPGSHGLP…PGERGPPGLP (68 aa). Basic and acidic residues predominate over residues 42–51; the sequence is PGRDGRDGVK. The span at 54–65 shows a compositional bias: pro residues; it reads PGPPGPMGPPGD. The region spanning 134–247 is the C-type lectin domain; that stretch reads IGGKVFSTNG…CLYNRLTICE (114 aa). 2 disulfides stabilise this stretch: cysteine 155/cysteine 246 and cysteine 224/cysteine 238. Residue asparagine 207 is glycosylated (N-linked (GlcNAc...) asparagine). Residues glutamate 215, alanine 217, asparagine 234, and aspartate 235 each contribute to the Ca(2+) site.

It belongs to the SFTPA family. As to quaternary structure, oligomeric complex of 6 set of homotrimers.

It localises to the secreted. It is found in the extracellular space. Its subcellular location is the extracellular matrix. The protein resides in the surface film. Functionally, in presence of calcium ions, it binds to surfactant phospholipids and contributes to lower the surface tension at the air-liquid interface in the alveoli of the mammalian lung and is essential for normal respiration. Enhances the expression of MYO18A/SP-R210 on alveolar macrophages. The polypeptide is Pulmonary surfactant-associated protein A (SFTPA1) (Macaca mulatta (Rhesus macaque)).